The following is a 390-amino-acid chain: Nicotinate phosphoribosyltransferase (390 aa).

The residue at position 211 (histidine 211) is a Phosphohistidine; by autocatalysis.

The protein belongs to the NAPRTase family. In terms of processing, transiently phosphorylated on a His residue during the reaction cycle. Phosphorylation strongly increases the affinity for substrates and increases the rate of nicotinate D-ribonucleotide production. Dephosphorylation regenerates the low-affinity form of the enzyme, leading to product release.

The enzyme catalyses nicotinate + 5-phospho-alpha-D-ribose 1-diphosphate + ATP + H2O = nicotinate beta-D-ribonucleotide + ADP + phosphate + diphosphate. It participates in cofactor biosynthesis; NAD(+) biosynthesis; nicotinate D-ribonucleotide from nicotinate: step 1/1. Catalyzes the synthesis of beta-nicotinate D-ribonucleotide from nicotinate and 5-phospho-D-ribose 1-phosphate at the expense of ATP. This Chromohalobacter salexigens (strain ATCC BAA-138 / DSM 3043 / CIP 106854 / NCIMB 13768 / 1H11) protein is Nicotinate phosphoribosyltransferase.